Reading from the N-terminus, the 120-residue chain is Adenosylhomocysteinase (120 aa).

Position 34 (asparagine 34) interacts with NAD(+).

It belongs to the adenosylhomocysteinase family. NAD(+) is required as a cofactor.

It localises to the cytoplasm. It catalyses the reaction S-adenosyl-L-homocysteine + H2O = L-homocysteine + adenosine. It participates in amino-acid biosynthesis; L-homocysteine biosynthesis; L-homocysteine from S-adenosyl-L-homocysteine: step 1/1. In terms of biological role, may play a key role in the regulation of the intracellular concentration of adenosylhomocysteine. The sequence is that of Adenosylhomocysteinase (ahcY) from Streptomyces fradiae (Streptomyces roseoflavus).